The sequence spans 535 residues: CTP synthase (535 aa).

An amidoligase domain region spans residues 1 to 267 (MTKYIFVTGG…DQIVCDHLKL (267 aa)). CTP is bound at residue serine 13. Serine 13 is a UTP binding site. 14–19 (SLGKGI) contributes to the ATP binding site. Tyrosine 54 contacts L-glutamine. Aspartate 71 serves as a coordination point for ATP. Residues aspartate 71 and glutamate 141 each contribute to the Mg(2+) site. CTP-binding positions include 148–150 (DIE), 188–193 (KTKPTQ), and lysine 224. UTP-binding positions include 188–193 (KTKPTQ) and lysine 224. 240-242 (RDA) lines the ATP pocket. The Glutamine amidotransferase type-1 domain maps to 292 to 534 (KIALVGKYVE…VRASITNKES (243 aa)). Glycine 354 is a binding site for L-glutamine. Cysteine 381 acts as the Nucleophile; for glutamine hydrolysis in catalysis. Residues 382–385 (LGMQ), glutamate 405, and arginine 462 each bind L-glutamine. Residues histidine 507 and glutamate 509 contribute to the active site.

Belongs to the CTP synthase family. In terms of assembly, homotetramer.

It catalyses the reaction UTP + L-glutamine + ATP + H2O = CTP + L-glutamate + ADP + phosphate + 2 H(+). It carries out the reaction L-glutamine + H2O = L-glutamate + NH4(+). The catalysed reaction is UTP + NH4(+) + ATP = CTP + ADP + phosphate + 2 H(+). It participates in pyrimidine metabolism; CTP biosynthesis via de novo pathway; CTP from UDP: step 2/2. Allosterically activated by GTP, when glutamine is the substrate; GTP has no effect on the reaction when ammonia is the substrate. The allosteric effector GTP functions by stabilizing the protein conformation that binds the tetrahedral intermediate(s) formed during glutamine hydrolysis. Inhibited by the product CTP, via allosteric rather than competitive inhibition. Its function is as follows. Catalyzes the ATP-dependent amination of UTP to CTP with either L-glutamine or ammonia as the source of nitrogen. Regulates intracellular CTP levels through interactions with the four ribonucleotide triphosphates. This chain is CTP synthase, found in Bacillus cereus (strain ATCC 10987 / NRS 248).